We begin with the raw amino-acid sequence, 101 residues long: Small ribosomal subunit protein uS14 (101 aa).

A compositionally biased stretch (basic and acidic residues) spans methionine 1 to asparagine 10. The tract at residues methionine 1 to lysine 23 is disordered.

Belongs to the universal ribosomal protein uS14 family. Part of the 30S ribosomal subunit. Contacts proteins S3 and S10.

Its function is as follows. Binds 16S rRNA, required for the assembly of 30S particles and may also be responsible for determining the conformation of the 16S rRNA at the A site. This chain is Small ribosomal subunit protein uS14, found in Nitrobacter hamburgensis (strain DSM 10229 / NCIMB 13809 / X14).